Consider the following 536-residue polypeptide: Phosphoenolpyruvate carboxykinase (ATP) (536 aa).

3 residues coordinate substrate: Arg61, Tyr195, and Lys201. ATP is bound by residues Lys201, His220, and 236-244 (GLSGTGKTT). Mn(2+) contacts are provided by Lys201 and His220. Residue Asp257 coordinates Mn(2+). Positions 285, 322, and 447 each coordinate ATP. Residue Arg322 participates in substrate binding.

This sequence belongs to the phosphoenolpyruvate carboxykinase (ATP) family. Mn(2+) serves as cofactor.

It is found in the cytoplasm. The enzyme catalyses oxaloacetate + ATP = phosphoenolpyruvate + ADP + CO2. It functions in the pathway carbohydrate biosynthesis; gluconeogenesis. In terms of biological role, involved in the gluconeogenesis. Catalyzes the conversion of oxaloacetate (OAA) to phosphoenolpyruvate (PEP) through direct phosphoryl transfer between the nucleoside triphosphate and OAA. This chain is Phosphoenolpyruvate carboxykinase (ATP), found in Brucella suis biovar 1 (strain 1330).